Reading from the N-terminus, the 559-residue chain is Pentatricopeptide repeat-containing protein At1g08610 (559 aa).

PPR repeat units lie at residues 103–137, 138–172, 173–207, 208–242, 243–277, 278–312, 313–347, 348–382, 383–417, 418–452, 453–487, 488–522, and 523–557; these read DEET…NQVP, HFPS…GGVP, DTIT…GSPP, DVIT…GCPP, FMIT…GCYP, DIVT…GLEL, NTVT…SYCP, TVIT…KCLP, DIVT…CCPP, GLIT…GIFP, DDIT…GNGI, RGST…GCKP, and DETI…KLLK.

Belongs to the PPR family. P subfamily.

The chain is Pentatricopeptide repeat-containing protein At1g08610 from Arabidopsis thaliana (Mouse-ear cress).